Consider the following 345-residue polypeptide: Pyruvate dehydrogenase E1 component subunit alpha (345 aa).

Heterodimer of an alpha and a beta chain. Thiamine diphosphate is required as a cofactor.

It catalyses the reaction N(6)-[(R)-lipoyl]-L-lysyl-[protein] + pyruvate + H(+) = N(6)-[(R)-S(8)-acetyldihydrolipoyl]-L-lysyl-[protein] + CO2. Functionally, the pyruvate dehydrogenase complex catalyzes the overall conversion of pyruvate to acetyl-CoA and CO(2). It contains multiple copies of three enzymatic components: pyruvate dehydrogenase (E1), dihydrolipoamide acetyltransferase (E2) and lipoamide dehydrogenase (E3). The polypeptide is Pyruvate dehydrogenase E1 component subunit alpha (pdhA) (Acholeplasma laidlawii).